Here is a 189-residue protein sequence, read N- to C-terminus: Large ribosomal subunit protein uL5c (189 aa).

It belongs to the universal ribosomal protein uL5 family. In terms of assembly, part of the 50S ribosomal subunit; contacts the 5S rRNA.

Its subcellular location is the plastid. It is found in the chloroplast. Functionally, binds 5S rRNA, forms part of the central protuberance of the 50S subunit. In Chara vulgaris (Common stonewort), this protein is Large ribosomal subunit protein uL5c (rpl5).